The following is a 200-amino-acid chain: Recombination protein RecR (200 aa).

The segment at 59-74 (CEVCGNVCESSPCTIC) adopts a C4-type zinc-finger fold. A Toprim domain is found at 82 to 177 (GTICVVEEPK…KVTRLASGLP (96 aa)).

It belongs to the RecR family.

May play a role in DNA repair. It seems to be involved in an RecBC-independent recombinational process of DNA repair. It may act with RecF and RecO. The polypeptide is Recombination protein RecR (Bifidobacterium animalis subsp. lactis (strain AD011)).